The sequence spans 354 residues: Sulfate/thiosulfate import ATP-binding protein CysA (354 aa).

Residues 3–237 enclose the ABC transporter domain; sequence IEVRGLSKRF…PATPFVYGFL (235 aa). 35-42 contacts ATP; the sequence is GPSGCGKT.

The protein belongs to the ABC transporter superfamily. Sulfate/tungstate importer (TC 3.A.1.6) family. In terms of assembly, the complex is composed of two ATP-binding proteins (CysA), two transmembrane proteins (CysT and CysW) and a solute-binding protein (CysP).

Its subcellular location is the cell inner membrane. The catalysed reaction is sulfate(out) + ATP + H2O = sulfate(in) + ADP + phosphate + H(+). The enzyme catalyses thiosulfate(out) + ATP + H2O = thiosulfate(in) + ADP + phosphate + H(+). Functionally, part of the ABC transporter complex CysAWTP involved in sulfate/thiosulfate import. Responsible for energy coupling to the transport system. The chain is Sulfate/thiosulfate import ATP-binding protein CysA from Bordetella bronchiseptica (strain ATCC BAA-588 / NCTC 13252 / RB50) (Alcaligenes bronchisepticus).